The primary structure comprises 451 residues: NADH-quinone oxidoreductase subunit D (451 aa).

The protein belongs to the complex I 49 kDa subunit family. In terms of assembly, NDH-1 is composed of 14 different subunits. Subunits NuoB, C, D, E, F, and G constitute the peripheral sector of the complex.

It is found in the cell membrane. It carries out the reaction a quinone + NADH + 5 H(+)(in) = a quinol + NAD(+) + 4 H(+)(out). NDH-1 shuttles electrons from NADH, via FMN and iron-sulfur (Fe-S) centers, to quinones in the respiratory chain. The immediate electron acceptor for the enzyme in this species is believed to be a menaquinone. Couples the redox reaction to proton translocation (for every two electrons transferred, four hydrogen ions are translocated across the cytoplasmic membrane), and thus conserves the redox energy in a proton gradient. This is NADH-quinone oxidoreductase subunit D from Mycolicibacterium gilvum (strain PYR-GCK) (Mycobacterium gilvum (strain PYR-GCK)).